Consider the following 148-residue polypeptide: Ribosomal RNA large subunit methyltransferase H 2 (148 aa).

S-adenosyl-L-methionine is bound by residues Leu-74, Gly-106, and 125-130; that span reads FSKMTF.

The protein belongs to the RNA methyltransferase RlmH family. As to quaternary structure, homodimer.

Its subcellular location is the cytoplasm. The catalysed reaction is pseudouridine(1915) in 23S rRNA + S-adenosyl-L-methionine = N(3)-methylpseudouridine(1915) in 23S rRNA + S-adenosyl-L-homocysteine + H(+). Its function is as follows. Specifically methylates the pseudouridine at position 1915 (m3Psi1915) in 23S rRNA. This chain is Ribosomal RNA large subunit methyltransferase H 2, found in Caldanaerobacter subterraneus subsp. tengcongensis (strain DSM 15242 / JCM 11007 / NBRC 100824 / MB4) (Thermoanaerobacter tengcongensis).